Consider the following 488-residue polypeptide: Acetyl-coenzyme A carboxylase carboxyl transferase subunit beta, chloroplastic (488 aa).

Residues 224–488 (LWIQCDNCYG…FFPLNKNEIK (265 aa)) enclose the CoA carboxyltransferase N-terminal domain. The Zn(2+) site is built by cysteine 228, cysteine 231, cysteine 244, and cysteine 247. Residues 228-247 (CDNCYGLMYKKVEMNVCEEC) form a C4-type zinc finger.

It belongs to the AccD/PCCB family. As to quaternary structure, acetyl-CoA carboxylase is a heterohexamer composed of biotin carboxyl carrier protein, biotin carboxylase and 2 subunits each of ACCase subunit alpha and ACCase plastid-coded subunit beta (accD). It depends on Zn(2+) as a cofactor.

Its subcellular location is the plastid. The protein resides in the chloroplast stroma. It carries out the reaction N(6)-carboxybiotinyl-L-lysyl-[protein] + acetyl-CoA = N(6)-biotinyl-L-lysyl-[protein] + malonyl-CoA. It participates in lipid metabolism; malonyl-CoA biosynthesis; malonyl-CoA from acetyl-CoA: step 1/1. Its function is as follows. Component of the acetyl coenzyme A carboxylase (ACC) complex. Biotin carboxylase (BC) catalyzes the carboxylation of biotin on its carrier protein (BCCP) and then the CO(2) group is transferred by the transcarboxylase to acetyl-CoA to form malonyl-CoA. This is Acetyl-coenzyme A carboxylase carboxyl transferase subunit beta, chloroplastic from Arabis hirsuta (Hairy rock-cress).